A 160-amino-acid polypeptide reads, in one-letter code: Cyanate hydratase (160 aa).

Catalysis depends on residues Arg-100, Glu-103, and Ser-126.

The protein belongs to the cyanase family.

It catalyses the reaction cyanate + hydrogencarbonate + 3 H(+) = NH4(+) + 2 CO2. In terms of biological role, catalyzes the reaction of cyanate with bicarbonate to produce ammonia and carbon dioxide. This chain is Cyanate hydratase, found in Neosartorya fischeri (strain ATCC 1020 / DSM 3700 / CBS 544.65 / FGSC A1164 / JCM 1740 / NRRL 181 / WB 181) (Aspergillus fischerianus).